The chain runs to 249 residues: MSSVNVDFEQAGELKIGQVGIANLRIRTLDVPRLVREMQDRVTRAPKLFGRAAVILDFGGLAQAPDLATAKALLDGLRSAGVLPVALAYGTSEIDLLSQQLGIPLLAKFRAQYETAAVSPPPPPPPPPARAEPAAPVARPAPGRMQRNAVRSGQQLYAENCDLTVLSTVGAGAEVIADGSIHIYGTLRGRALAGAQGNPDARIFCRDFHAELVAIAGHYKVLDDVPMDLRGKAVQVWLEQDQIKIAALD.

The disordered stretch occupies residues 116 to 149 (AAVSPPPPPPPPPARAEPAAPVARPAPGRMQRNA). Over residues 119–130 (SPPPPPPPPPAR) the composition is skewed to pro residues. Low complexity predominate over residues 131 to 142 (AEPAAPVARPAP).

This sequence belongs to the MinC family. Interacts with MinD and FtsZ.

Functionally, cell division inhibitor that blocks the formation of polar Z ring septums. Rapidly oscillates between the poles of the cell to destabilize FtsZ filaments that have formed before they mature into polar Z rings. Prevents FtsZ polymerization. In Xanthomonas campestris pv. campestris (strain ATCC 33913 / DSM 3586 / NCPPB 528 / LMG 568 / P 25), this protein is Probable septum site-determining protein MinC.